The primary structure comprises 1105 residues: Protein phosphatase 1 regulatory subunit 26 (1105 aa).

4 disordered regions span residues 228 to 382 (LNDK…NKLA), 444 to 468 (QSTY…DSLV), 504 to 526 (TSPE…AKAM), and 589 to 748 (LNRG…DSDD). Basic and acidic residues predominate over residues 275–285 (LLRKHASDSKL). Residues 306–317 (TKTSSPSPKSTP) show a composition bias toward low complexity. Residues 359 to 368 (SPTSANSLTH) show a composition bias toward polar residues. Pro residues predominate over residues 451–460 (TEPPPPPPEP). The segment covering 504–516 (TSPELGSQSSKLS) has biased composition (polar residues). Positions 602–612 (SYSSGDKSSSL) are enriched in low complexity. Basic residues predominate over residues 628-647 (SKRKYKKRPKDGKSQCKKRV). Over residues 686–701 (NSLEKSKKRREEKAVE) the composition is skewed to basic and acidic residues. Positions 705–715 (PSCSSSPQGNK) are enriched in polar residues. Residues 733–742 (RALDDAHESS) show a composition bias toward basic and acidic residues.

It localises to the nucleus. It is found in the nucleolus. In terms of biological role, may inhibit phosphatase activity of protein phosphatase 1 (PP1) complexes. May positively regulate cell proliferation. The chain is Protein phosphatase 1 regulatory subunit 26 (ppp1r26) from Xenopus laevis (African clawed frog).